The sequence spans 181 residues: Der GTPase-activating protein YihI (181 aa).

A disordered region spans residues 1 to 73; that stretch reads MSRIKKARKP…DPRIGSKKPI (73 aa). Over residues 22–32 the composition is skewed to basic and acidic residues; sequence NRTDRDVESRE. The span at 33 to 42 shows a compositional bias: basic residues; the sequence is LKRKRKRKGL. The segment covering 55–67 has biased composition (basic and acidic residues); that stretch reads QARRNAQKKDPRI.

Belongs to the YihI family. In terms of assembly, interacts with Der.

In terms of biological role, a GTPase-activating protein (GAP) that modifies Der/EngA GTPase function. May play a role in ribosome biogenesis. This chain is Der GTPase-activating protein YihI, found in Aliivibrio fischeri (strain MJ11) (Vibrio fischeri).